The chain runs to 162 residues: Large ribosomal subunit protein uL11 (162 aa).

A disordered region spans residues 1 to 27; it reads MAGTIEVLVPGGEANPGPPLGPELGPT.

This sequence belongs to the universal ribosomal protein uL11 family. As to quaternary structure, part of the 50S ribosomal subunit. Forms part of the ribosomal stalk which helps the ribosome interact with GTP-bound translation factors. Forms a heptameric L10(L12)2(L12)2(L12)2 complex, where L10 forms an elongated spine to which 3 L12 dimers bind in a sequential fashion.

In terms of biological role, forms part of the ribosomal stalk which helps the ribosome interact with GTP-bound translation factors. The sequence is that of Large ribosomal subunit protein uL11 from Haloarcula marismortui (strain ATCC 43049 / DSM 3752 / JCM 8966 / VKM B-1809) (Halobacterium marismortui).